A 485-amino-acid chain; its full sequence is Glutamyl-tRNA(Gln) amidotransferase subunit A (485 aa).

Catalysis depends on charge relay system residues K78 and S153. The active-site Acyl-ester intermediate is the S177.

The protein belongs to the amidase family. GatA subfamily. In terms of assembly, heterotrimer of A, B and C subunits.

The enzyme catalyses L-glutamyl-tRNA(Gln) + L-glutamine + ATP + H2O = L-glutaminyl-tRNA(Gln) + L-glutamate + ADP + phosphate + H(+). In terms of biological role, allows the formation of correctly charged Gln-tRNA(Gln) through the transamidation of misacylated Glu-tRNA(Gln) in organisms which lack glutaminyl-tRNA synthetase. The reaction takes place in the presence of glutamine and ATP through an activated gamma-phospho-Glu-tRNA(Gln). This Trichlorobacter lovleyi (strain ATCC BAA-1151 / DSM 17278 / SZ) (Geobacter lovleyi) protein is Glutamyl-tRNA(Gln) amidotransferase subunit A.